Consider the following 1070-residue polypeptide: DNA-directed RNA polymerase subunit beta (1070 aa).

Belongs to the RNA polymerase beta chain family. In plastids the minimal PEP RNA polymerase catalytic core is composed of four subunits: alpha, beta, beta', and beta''. When a (nuclear-encoded) sigma factor is associated with the core the holoenzyme is formed, which can initiate transcription.

It localises to the plastid. The protein localises to the chloroplast. The enzyme catalyses RNA(n) + a ribonucleoside 5'-triphosphate = RNA(n+1) + diphosphate. Functionally, DNA-dependent RNA polymerase catalyzes the transcription of DNA into RNA using the four ribonucleoside triphosphates as substrates. This chain is DNA-directed RNA polymerase subunit beta, found in Solanum tuberosum (Potato).